The following is a 189-amino-acid chain: Gluconokinase (189 aa).

16–23 is an ATP binding site; that stretch reads GVSGAGKS.

Belongs to the gluconokinase GntK/GntV family. As to quaternary structure, monomer.

The catalysed reaction is D-gluconate + ATP = 6-phospho-D-gluconate + ADP + H(+). It participates in carbohydrate acid metabolism; D-gluconate degradation. Its function is as follows. Phosphorylates gluconate to 6-phosphogluconate. The sequence is that of Gluconokinase from Arabidopsis thaliana (Mouse-ear cress).